Consider the following 394-residue polypeptide: Na(+)/H(+) antiporter NhaA (394 aa).

The next 11 membrane-spanning stretches (helical) occupy residues 24 to 44 (AGLV…SPLA), 58 to 78 (LSVQ…LVGL), 96 to 116 (TLPG…YVML), 126 to 146 (GWAI…SLLG), 155 to 175 (IFLA…IAIF), 180 to 200 (INVA…SLCA), 214 to 234 (AVLW…GVLL), 267 to 287 (VAFA…FASI), 300 to 320 (VAAG…ALMV), 336 to 356 (VLGV…IGLL), and 370 to 390 (GILA…RIAG).

This sequence belongs to the NhaA Na(+)/H(+) (TC 2.A.33) antiporter family.

The protein resides in the cell inner membrane. The enzyme catalyses Na(+)(in) + 2 H(+)(out) = Na(+)(out) + 2 H(+)(in). Na(+)/H(+) antiporter that extrudes sodium in exchange for external protons. The polypeptide is Na(+)/H(+) antiporter NhaA (Azorhizobium caulinodans (strain ATCC 43989 / DSM 5975 / JCM 20966 / LMG 6465 / NBRC 14845 / NCIMB 13405 / ORS 571)).